An 81-amino-acid polypeptide reads, in one-letter code: Probable small nuclear ribonucleoprotein G (81 aa).

A Sm domain is found at 5-76 (GQPPALKKYM…VVTVEALEPV (72 aa)).

The protein belongs to the snRNP Sm proteins family.

The protein localises to the nucleus. Its function is as follows. Probable common Sm protein, is found in U1 and U2 snRNPs and may be part of the spliceosome. The sequence is that of Probable small nuclear ribonucleoprotein G (C29) from Medicago sativa (Alfalfa).